The sequence spans 96 residues: Aspartyl/glutamyl-tRNA(Asn/Gln) amidotransferase subunit C (96 aa).

Belongs to the GatC family. In terms of assembly, heterotrimer of A, B and C subunits.

The catalysed reaction is L-glutamyl-tRNA(Gln) + L-glutamine + ATP + H2O = L-glutaminyl-tRNA(Gln) + L-glutamate + ADP + phosphate + H(+). It catalyses the reaction L-aspartyl-tRNA(Asn) + L-glutamine + ATP + H2O = L-asparaginyl-tRNA(Asn) + L-glutamate + ADP + phosphate + 2 H(+). In terms of biological role, allows the formation of correctly charged Asn-tRNA(Asn) or Gln-tRNA(Gln) through the transamidation of misacylated Asp-tRNA(Asn) or Glu-tRNA(Gln) in organisms which lack either or both of asparaginyl-tRNA or glutaminyl-tRNA synthetases. The reaction takes place in the presence of glutamine and ATP through an activated phospho-Asp-tRNA(Asn) or phospho-Glu-tRNA(Gln). This is Aspartyl/glutamyl-tRNA(Asn/Gln) amidotransferase subunit C from Aliarcobacter butzleri (strain RM4018) (Arcobacter butzleri).